A 691-amino-acid polypeptide reads, in one-letter code: Germ cell nuclear acidic protein (691 aa).

An SUMO interaction motif 1 (SIM) motif is present at residues 22 to 25; sequence ILNV. A disordered region spans residues 25–488; that stretch reads VQSSSDDTSG…GAAKVEKRKT (464 aa). A compositionally biased stretch (low complexity) spans 27–36; sequence SSSDDTSGSS. The segment covering 48-63 has biased composition (polar residues); that stretch reads CILNVQSRSGDTSGSS. Short sequence motifs (SUMO interaction motif 1 (SIM)) lie at residues 76–79, 97–100, and 121–124; these read VVVI, LLEI, and IVIS. Residues 86-97 are compositionally biased toward basic and acidic residues; it reads ECHTHEEKKAKL. A compositionally biased stretch (acidic residues) spans 124–333; it reads SDDDNDDDNG…VPDDNSDDLE (210 aa). Residues 467–488 are compositionally biased toward basic residues; the sequence is GHKKRGPSKKKPGAAKVEKRKT. The region spanning 522–677 is the SprT-like domain; the sequence is VQRIYDLFNR…AKCKGSLVMV (156 aa).

The protein belongs to the serine-aspartate repeat-containing protein (SDr) family. As to quaternary structure, interacts (via SIM domains) with SUMO2; this interaction allows the GCNA recruitment to DPCs sites. Interacts with TOP2A; this interaction allows the resolution of topoisomerase II (TOP2A) DNA-protein cross-links. Expressed in germ cells of the testis (at protein level). Detected in skeletal muscle, liver, kidney, pancreas, heart, lung and brain. Expressed throughout spermatogenesis, from spermatogonia to elongated spermatids, in normal adult testis (at protein level).

Its subcellular location is the nucleus. The protein localises to the PML body. It is found in the chromosome. Functionally, may play a role in DNA-protein cross-links (DPCs) clearance through a SUMO-dependent recruitment to sites of DPCs, ensuring the genomic stability by protecting germ cells and early embryos from various sources of damage. Can resolve the topoisomerase II (TOP2A) DPCs. In Homo sapiens (Human), this protein is Germ cell nuclear acidic protein.